The chain runs to 460 residues: Argininosuccinate lyase (460 aa).

The protein belongs to the lyase 1 family. Argininosuccinate lyase subfamily.

Its subcellular location is the cytoplasm. The catalysed reaction is 2-(N(omega)-L-arginino)succinate = fumarate + L-arginine. It participates in amino-acid biosynthesis; L-arginine biosynthesis; L-arginine from L-ornithine and carbamoyl phosphate: step 3/3. This Maridesulfovibrio salexigens (strain ATCC 14822 / DSM 2638 / NCIMB 8403 / VKM B-1763) (Desulfovibrio salexigens) protein is Argininosuccinate lyase.